A 273-amino-acid polypeptide reads, in one-letter code: MPAETWRLLDTGVSDPYTNMAIDEAILLEHREGKTPPTLRFYAWSPPTISLGYFQQLEKEIDLEAVKERGLGLVRRLTGGRAVLHDDEVTYSVVAREDHPLMIGGIRPSYLRLAKALAAGLRELGAPVEIASGRKGGREEHTTAACFDAPSWYEITCGGRKLVGSAQTRKGGVVLQHGSIVLTLNGDDLFAVLKMPSEAVRQRLLAKFYHQACGLEEVLGRRVEAGVIKENIVRAFTRLYAVEFVPGGLTEGEKGRLKELRAKYAAADWLKRR.

Positions 33 to 244 constitute a BPL/LPL catalytic domain; the sequence is GKTPPTLRFY…AFTRLYAVEF (212 aa). Cysteine 146 serves as the catalytic Acyl-thioester intermediate.

This sequence belongs to the octanoyltransferase LipM family. In terms of assembly, monomer.

The enzyme catalyses octanoyl-[ACP] + L-lysyl-[protein] = N(6)-octanoyl-L-lysyl-[protein] + holo-[ACP] + H(+). It participates in protein modification; protein lipoylation via endogenous pathway; protein N(6)-(lipoyl)lysine from octanoyl-[acyl-carrier-protein]. Its function is as follows. Catalyzes the transfer of endogenously produced octanoic acid from octanoyl-acyl-carrier-protein onto the lipoyl domain of GcvH, an intermediate carrier during protein lipoylation. This is Octanoyltransferase LipM from Moorella thermoacetica (strain ATCC 39073 / JCM 9320).